Here is a 660-residue protein sequence, read N- to C-terminus: Bifunctional polymyxin resistance protein ArnA (660 aa).

Residues 1–304 (MKTVVFAYHD…MLGLVQGSRL (304 aa)) form a formyltransferase ArnAFT region. Residue 86–88 (HLI) participates in (6R)-10-formyltetrahydrofolate binding. H104 (proton donor; for formyltransferase activity) is an active-site residue. Residues R114 and 136 to 140 (VKRAD) each bind (6R)-10-formyltetrahydrofolate. Residues 314 to 660 (RRTRVLILGV…RTVDLTDKPS (347 aa)) are dehydrogenase ArnADH. NAD(+) is bound by residues D347 and 368–369 (DI). UDP-alpha-D-glucuronate is bound by residues A393, Y398, and 432 to 433 (TS). The active-site Proton acceptor; for decarboxylase activity is the E434. UDP-alpha-D-glucuronate contacts are provided by residues R460, N492, 526 to 535 (KLIDGGKQKR), and Y613. Residue R619 is the Proton donor; for decarboxylase activity of the active site.

This sequence in the N-terminal section; belongs to the Fmt family. UDP-L-Ara4N formyltransferase subfamily. The protein in the C-terminal section; belongs to the NAD(P)-dependent epimerase/dehydratase family. UDP-glucuronic acid decarboxylase subfamily. As to quaternary structure, homohexamer, formed by a dimer of trimers.

The enzyme catalyses UDP-alpha-D-glucuronate + NAD(+) = UDP-beta-L-threo-pentopyranos-4-ulose + CO2 + NADH. The catalysed reaction is UDP-4-amino-4-deoxy-beta-L-arabinose + (6R)-10-formyltetrahydrofolate = UDP-4-deoxy-4-formamido-beta-L-arabinose + (6S)-5,6,7,8-tetrahydrofolate + H(+). It functions in the pathway nucleotide-sugar biosynthesis; UDP-4-deoxy-4-formamido-beta-L-arabinose biosynthesis; UDP-4-deoxy-4-formamido-beta-L-arabinose from UDP-alpha-D-glucuronate: step 1/3. Its pathway is nucleotide-sugar biosynthesis; UDP-4-deoxy-4-formamido-beta-L-arabinose biosynthesis; UDP-4-deoxy-4-formamido-beta-L-arabinose from UDP-alpha-D-glucuronate: step 3/3. It participates in bacterial outer membrane biogenesis; lipopolysaccharide biosynthesis. Functionally, bifunctional enzyme that catalyzes the oxidative decarboxylation of UDP-glucuronic acid (UDP-GlcUA) to UDP-4-keto-arabinose (UDP-Ara4O) and the addition of a formyl group to UDP-4-amino-4-deoxy-L-arabinose (UDP-L-Ara4N) to form UDP-L-4-formamido-arabinose (UDP-L-Ara4FN). The modified arabinose is attached to lipid A and is required for resistance to polymyxin and cationic antimicrobial peptides. The sequence is that of Bifunctional polymyxin resistance protein ArnA from Shigella flexneri serotype 5b (strain 8401).